The following is a 156-amino-acid chain: Endogenous retrovirus group K member 104 Pro protein (156 aa).

The 76-residue stretch at 21–96 folds into the Peptidase A2 domain; it reads FEGLVDTEAD…IPLNLWGQDL (76 aa). Aspartate 26 is a catalytic residue. A G-patch domain is found at 111–156; it reads YSPTSQKIMTKMGYIPGKGLGKNEDGIKVPVEAKINQKREGIGYPF.

The protein belongs to the peptidase A2 family. HERV class-II K(HML-2) subfamily. Active as a homodimer. In terms of processing, autoproteolytically processed at the N-terminus. Expected C-terminal autoprocessing not detected. The sequence shown is that of the processed Pro protein.

The catalysed reaction is Processing at the authentic HIV-1 PR recognition site and release of the mature p17 matrix and the p24 capsid protein, as a result of the cleavage of the -SQNY-|-PIVQ- cleavage site.. Retroviral proteases have roles in the processing of the primary translation products and the maturation of the viral particle. Endogenous Pro proteins may have kept, lost or modified their original function during evolution. This Homo sapiens (Human) protein is Endogenous retrovirus group K member 104 Pro protein (HERV-K104).